Here is a 600-residue protein sequence, read N- to C-terminus: CTP synthase (600 aa).

Residues 304–570 (TIVLVGKYTH…IQSGEEVEWS (267 aa)) form the Glutamine amidotransferase type-1 domain. Residues Cys403, His532, and Glu534 each act as for GATase activity in the active site.

The protein belongs to the CTP synthase family.

The enzyme catalyses UTP + L-glutamine + ATP + H2O = CTP + L-glutamate + ADP + phosphate + 2 H(+). It participates in pyrimidine metabolism; CTP biosynthesis via de novo pathway; CTP from UDP: step 2/2. Functionally, catalyzes the ATP-dependent amination of UTP to CTP with either L-glutamine or ammonia as the source of nitrogen. This Schizosaccharomyces pombe (strain 972 / ATCC 24843) (Fission yeast) protein is CTP synthase (ura7).